The primary structure comprises 399 residues: CCA-adding enzyme (399 aa).

Positions 28 and 31 each coordinate ATP. CTP-binding residues include Gly-28 and Arg-31. The Mg(2+) site is built by Asp-41 and Asp-43. Residues Arg-112, Asp-155, Arg-158, Arg-161, and Arg-164 each contribute to the ATP site. Arg-112, Asp-155, Arg-158, Arg-161, and Arg-164 together coordinate CTP.

This sequence belongs to the tRNA nucleotidyltransferase/poly(A) polymerase family. Bacterial CCA-adding enzyme type 3 subfamily. In terms of assembly, homodimer. Requires Mg(2+) as cofactor.

It carries out the reaction a tRNA precursor + 2 CTP + ATP = a tRNA with a 3' CCA end + 3 diphosphate. The enzyme catalyses a tRNA with a 3' CCA end + 2 CTP + ATP = a tRNA with a 3' CCACCA end + 3 diphosphate. In terms of biological role, catalyzes the addition and repair of the essential 3'-terminal CCA sequence in tRNAs without using a nucleic acid template. Adds these three nucleotides in the order of C, C, and A to the tRNA nucleotide-73, using CTP and ATP as substrates and producing inorganic pyrophosphate. tRNA 3'-terminal CCA addition is required both for tRNA processing and repair. Also involved in tRNA surveillance by mediating tandem CCA addition to generate a CCACCA at the 3' terminus of unstable tRNAs. While stable tRNAs receive only 3'-terminal CCA, unstable tRNAs are marked with CCACCA and rapidly degraded. The chain is CCA-adding enzyme from Staphylococcus saprophyticus subsp. saprophyticus (strain ATCC 15305 / DSM 20229 / NCIMB 8711 / NCTC 7292 / S-41).